A 2534-amino-acid chain; its full sequence is MSPASRSRVEIADSESDSERLSSSPWSILSDNDSNTSDERSTRAGPGSLEPIAVIGIGCRLSGSATDVSGLWDMLKSGRSGWTPGPGTRFNMKAFQDPTGTRSGTTNATGGHFIREDISKFDATFFGINPVEAQAMDPQQRLMLEVAYEAFENAGITMDALWGSNTGVYVGQWASDYHEIATRDIERPPLYLVTGTGPAITSNRVSYVFNLRGPSFTVDTGCSSSLVALHQAVLSLRNRETTQCFVGGVNLLLDPQRFHYQSRLKMFSKDGRSFPFDARANGYGRGEGVTGVVLKPLSVALRDGDPVRAVIRNSVLNQDGRTPGISVPSAVAQKEAIIRAYRQAKLDLYADYVEAHGTGTKVGDPIETSAIAAALTQRRSPSRPLPIGSIKGNIGHTESAAGLAGLIKSVLMLENGMIPPQVNYETTNPDIHLEEWNLRIPTKLERQTLRRISLNSFGYGGTNAHVIIDAAHEAISAFGRLSLSRHLQLSYHSEKPRVFMVSGASEKACQRVCARLARYLVVNHRNSINPDALLARLAHTLAKQSIHAYRVIFVASELDELIKQLITASHSTITRREKFGQHRIALIFSGQGAQYAEMGRDLLKSYPSFVRSLERARQQLSRLGCTWDLLSELCRPKADSRVNEPAFSQPMCTAIQLALVDLLNEFGVSPSAVLGHSSGEIGAAYAAGALSFRDAISVSYYRGKLASELLAENQSPGAMIAVGAPPDIAEQHINKLGTDVGRMRIACFNSPSSVTVSGDVAAIDRIKEVLDTEGLFNRKLITHGAAYHSHQMKLIEDKYIAALKGLKAKPVSSSIRMFSSVTSKELDESTVLDGGYWAQNLVSPVLFSQALRTMCEQDYNGLPIDTLIEVGPHSQLSGPVNQILKTIPGPHGQASYTNTLKRGDDAETALLRCLGFLAIKNGSVRLCDLNKDSKDSDIQPLADLPPYSFDHDRSFWHETRLSRDYRHREHLPHELLGTLSADVNKLEPRWRRFVSLKETPWLRNHIIQGLITFPAAGYITMAIQAIRQHMHTANPASTIQFIRLRDVSFGKGLVLPDENAEVEISLSLRPQARTARESSGIWNEFRIFTVTPDQKWTEHCRGLVQAEVDSVEGFRSIFTPADISRIDSECTHGTIPQKFYAVGKRNGLDWQHPFNNLHQIRSSKHSCVATARVPEYEMPSGGMEDLLHPAVLDSALFHGLSTVIYLEDGRSSAYVPTFIKQLWVANRHVAPGSYLTCSTIRRNEPLVFDLHTKDEINQMAVVAQGIRVTSLGGDVAAGVSKREACHTQTLVPYVDAWTTEHRDQVCRATIELGSLMETNRALDAITIHFAQNAIREISLNDIQETHLQRYFQWMGTLADETYDNILLENKPEDLGVIGEAIAILGPHLVDILKGKTSALSLLTKNNLLSRVYTEWCSSRLYPQMSAYCHELGRFNPQLKVLEIGAGTGSATLPILKALNDCSGRFIQRYDFTDISPGFFEPAKERLGDLANVVEFRVLDAGRNAQEQGFEEGAYDLIVACNVIHATPRIDETLRNIRPLLKPGGKFMLMEISRYTLYFNIVFGLFEGWWLGYDEGRTRSPLLTDSEWCQRLEKAGFAHIEKAFVDYPHENGGSLSVFISTAPFPRRNESLPIHLLTDSNASNATEEQAQEIQQACQTSVALLPITHPCQHGGVAILLPEIAKLLCAEPDVNVWNSFKNWILKSRAVLLVSNCTMADSSHAETGLWAGFARTMRLEYPNLRQVVLDIQTPNVPVMSKLKEVLPIILNSSSFDLDCLSSEVENEFTEKDGQLFVSRYAYRPDISRDVDLTSRQAASEPVPFVSTGRILTAELGVPGLLETIRWKDDIECPPLGPDDVRFELRGASINFKDVLIAAGQLEGITEMRNDCSGVVVEVGENMKHRFKPGDRVCALYSRSYTNYPLVHGDCCQVIPDSLSFAEGASLPIVWATVYYGLVDKGSLSKGEKILIHSAAGAVGQAAIMLAQHLGAEVFATVGSEAKRDLLHAKYGVPYDHIFSSRTTAFYGEIMKSTGGYGVDVVLNSLSGEMFRESCNLMASFGRFVEIGRKDLMDDALMPMEFLLRNITFSYVDLTAIIEQRKPLARRLLHDIADLAASGSIRPVTLTTMPISDIEIAFRQIQAGKHTGKIVLTVEENQEVPAVPSMPKQARLHEDASYIVVGGLGGLGRWLTTWLADHGAKHIVALSRSGAKDADSRTFISNIRGRGVNLIAPPCDVVCADAVVALAQELKRSELPPVRGVINSAMVLRDTLFDNMTEDDWRTALASKVRGSQNLHTTFKSLDFFVMMSSIVAVRGNYGQSNYSAACSFQDTFVRHMVQQGEPAFSINIGPIRDVGYVSENPEVAEALRRNGLGSIGVSDVLIVLNHAILNARGANPSTCVASIGLIASDDESENGRDFLMTDRRFSQLVKHNGSKQKSAGEALDAITLLSAATQLDEAVHIVTNAILNQLSKLIVTPVEMLSPAQSLDSYGVDSLVAVELRNWIGAYLHANVQLMVIRGTGSISQLAAIVAKESRVVKL.

Positions 1–49 (MSPASRSRVEIADSESDSERLSSSPWSILSDNDSNTSDERSTRAGPGSL) are disordered. The Ketosynthase family 3 (KS3) domain occupies 49 to 470 (LEPIAVIGIG…GTNAHVIIDA (422 aa)). Catalysis depends on for beta-ketoacyl synthase activity residues cysteine 222, histidine 356, and histidine 396. Positions 587–885 (IFSGQGAQYA…LSGPVNQILK (299 aa)) are malonyl-CoA:ACP transacylase (MAT) domain. The interval 973–1111 (HELLGTLSAD…GLVQAEVDSV (139 aa)) is N-terminal hotdog fold. The dehydratase (DH) domain stretch occupies residues 973 to 1273 (HELLGTLSAD…QGIRVTSLGG (301 aa)). The PKS/mFAS DH domain occupies 973-1277 (HELLGTLSAD…VTSLGGDVAA (305 aa)). Histidine 1005 acts as the Proton acceptor; for dehydratase activity in catalysis. Positions 1131-1277 (THGTIPQKFY…VTSLGGDVAA (147 aa)) are C-terminal hotdog fold. Aspartate 1193 acts as the Proton donor; for dehydratase activity in catalysis. Residues 1395 to 1625 (KTSALSLLTK…VFISTAPFPR (231 aa)) form a methyltransferase (CMet) domain region. Residues 1834–2146 (GLLETIRWKD…AGKHTGKIVL (313 aa)) are enoyl reductase (ER) domain. Residues 2452-2529 (EAVHIVTNAI…QLAAIVAKES (78 aa)) form the Carrier domain. The tract at residues 2453-2526 (AVHIVTNAIL…SISQLAAIVA (74 aa)) is ketoreductase (KR) domain. Position 2489 is an O-(pantetheine 4'-phosphoryl)serine (serine 2489).

It functions in the pathway antibiotic biosynthesis. Its function is as follows. Polyketide synthase; part of the gene cluster that mediates the biosynthesis of emericellamides, secondary metabolites acting as antibiotics. The biosynthesis of emericellamides initiates from the highly reducing polyketide synthase easB which catalyzes the formation of the linear polyketide chain. EasB produces several polyketides that can be further processed by the downstream enzymes. The polyketides are released from easB as linear polyketide carboxylic acids, which are converted to CoA thioesters by the acyl-CoA ligase easD. The substrates are then loaded onto the acyltransferase easC, which shuttles them to the first thiolation (T) domain of the nonribosomal peptide synthetase easA. EasA then performs condensation of the polyketides with one glycine, two alanine, one valine and one leucine residues. A last step of cyclization leads to the production of emericellamides. This chain is Highly reducing polyketide synthase easB, found in Emericella nidulans (strain FGSC A4 / ATCC 38163 / CBS 112.46 / NRRL 194 / M139) (Aspergillus nidulans).